We begin with the raw amino-acid sequence, 480 residues long: Transmembrane protein 161A (480 aa).

An N-terminal signal peptide occupies residues 1 to 28; it reads MAVLGVQLVVTLFTATLMHRLAPHCSFA. The Extracellular segment spans residues 29 to 98; the sequence is RWLLCNGSLF…LTAVDALVLR (70 aa). Asparagine 34 carries N-linked (GlcNAc...) asparagine glycosylation. A helical transmembrane segment spans residues 99–119; the sequence is FFLEYQWFVDFAVYSVGVYLF. Residues 120–134 lie on the Cytoplasmic side of the membrane; the sequence is TEAYYFVLGPVQETN. The helical transmembrane segment at 135–155 threads the bilayer; the sequence is IAVFWCLLTLAFSLKVFLMVT. The Extracellular portion of the chain corresponds to 156 to 166; that stretch reads RLYFSTKEGGE. Residues 167-187 form a helical membrane-spanning segment; the sequence is RSVCLSFAFLFLLLAMLVQVV. Over 188 to 224 the chain is Cytoplasmic; the sequence is REETLELGLEPGLASMTQHLEPILKKQDWDWTLPVIK. The chain crosses the membrane as a helical span at residues 225-245; that stretch reads LAIRLGLAVLGSLLGAFLIFP. The Extracellular segment spans residues 246–263; it reads GLRLAQTHQDALTLSADR. The helical transmembrane segment at 264 to 284 threads the bilayer; it reads PLLQLLLHTSFLSPLCTLWLW. Residues 285–304 lie on the Cytoplasmic side of the membrane; the sequence is TKPVARDFLYQAPTRNMTFS. A helical transmembrane segment spans residues 305–325; the sequence is VPSEGAFDSLRLWVLVALCLL. The Extracellular portion of the chain corresponds to 326-370; sequence RLAVTRPHLQAYLCLAKARVEQLRKEAGRIEAREIQQRVVRVYCY. The helical transmembrane segment at 371 to 391 threads the bilayer; sequence VTVVSLQYLTPLILTLHCTLL. At 392–450 the chain is on the cytoplasmic side; sequence LKTLGGYSWALSSTPPPLAPSQPSEALIPVDPAGDEAQQTAAQVAGILGGLLTPLFLRG. Residues 451 to 473 traverse the membrane as a helical segment; sequence MLAYIIWWTAACQLLSSLFGLYF. The Extracellular segment spans residues 474 to 480; it reads HQHLAAS.

This sequence belongs to the TMEM161 family.

The protein localises to the membrane. May play a role in protection against oxidative stress. Overexpression leads to reduced levels of oxidant-induced DNA damage and apoptosis. This is Transmembrane protein 161A (Tmem161a) from Mus musculus (Mouse).